We begin with the raw amino-acid sequence, 280 residues long: Bifunctional protein FolD (280 aa).

Residues 166–168 (GRS) and Ser191 each bind NADP(+).

It belongs to the tetrahydrofolate dehydrogenase/cyclohydrolase family. As to quaternary structure, homodimer.

The catalysed reaction is (6R)-5,10-methylene-5,6,7,8-tetrahydrofolate + NADP(+) = (6R)-5,10-methenyltetrahydrofolate + NADPH. It carries out the reaction (6R)-5,10-methenyltetrahydrofolate + H2O = (6R)-10-formyltetrahydrofolate + H(+). It participates in one-carbon metabolism; tetrahydrofolate interconversion. Functionally, catalyzes the oxidation of 5,10-methylenetetrahydrofolate to 5,10-methenyltetrahydrofolate and then the hydrolysis of 5,10-methenyltetrahydrofolate to 10-formyltetrahydrofolate. The chain is Bifunctional protein FolD from Saccharophagus degradans (strain 2-40 / ATCC 43961 / DSM 17024).